The following is a 501-amino-acid chain: DEAD-box ATP-dependent RNA helicase 20 (501 aa).

Basic and acidic residues-rich tracts occupy residues 1-20 (MSRYDSRTGDSTSYRDRRSD) and 38-53 (SKKDNDGNESPRKLDL). The tract at residues 1–53 (MSRYDSRTGDSTSYRDRRSDSGFGGTSSYGSSGSHTSSKKDNDGNESPRKLDL) is disordered. The short motif at 99-127 (KSFRDVGFPDYVLEEVKKAGFTEPTPIQS) is the Q motif element. Residues 130–305 (WPMAMKGRDL…KKFLYNPYKV (176 aa)) form the Helicase ATP-binding domain. 143-150 (AETGSGKT) contacts ATP. Positions 253–256 (DEAD) match the DEAD box motif. One can recognise a Helicase C-terminal domain in the interval 333 to 478 (KLVKLLEDIM…KVSPELASMG (146 aa)). The disordered stretch occupies residues 473 to 501 (ELASMGRSTAPPPPGLGGFRDRGSRRGWS). The span at 491–501 (FRDRGSRRGWS) shows a compositional bias: basic and acidic residues.

It belongs to the DEAD box helicase family. DDX5/DBP2 subfamily.

The protein resides in the nucleus. It carries out the reaction ATP + H2O = ADP + phosphate + H(+). Its function is as follows. ATP-dependent RNA helicase involved nonsense-mediated mRNA decay and ribosome biogenesis through rRNA processing. The chain is DEAD-box ATP-dependent RNA helicase 20 (RH20) from Arabidopsis thaliana (Mouse-ear cress).